The primary structure comprises 319 residues: 1-aminocyclopropane-1-carboxylate oxidase (319 aa).

Residues 153–253 (PTFGTKVSNY…RMSIASFYNP (101 aa)) form the Fe2OG dioxygenase domain. Fe cation is bound by residues histidine 177, aspartate 179, and histidine 234.

The protein belongs to the iron/ascorbate-dependent oxidoreductase family. Requires Fe cation as cofactor.

It carries out the reaction 1-aminocyclopropane-1-carboxylate + L-ascorbate + O2 = ethene + L-dehydroascorbate + hydrogen cyanide + CO2 + 2 H2O. It participates in alkene biosynthesis; ethylene biosynthesis via S-adenosyl-L-methionine; ethylene from S-adenosyl-L-methionine: step 2/2. The sequence is that of 1-aminocyclopropane-1-carboxylate oxidase (ACO) from Actinidia deliciosa (Kiwi).